A 441-amino-acid chain; its full sequence is Xylose isomerase (441 aa).

Residues H99 and D102 contribute to the active site. 6 residues coordinate Mn(2+): E230, E266, D294, D305, D307, and D337.

This sequence belongs to the xylose isomerase family. In terms of assembly, homotetramer. Mn(2+) serves as cofactor.

Its subcellular location is the cytoplasm. The enzyme catalyses alpha-D-xylose = alpha-D-xylulofuranose. This chain is Xylose isomerase (xylA), found in Geobacillus stearothermophilus (Bacillus stearothermophilus).